Consider the following 134-residue polypeptide: Transcription antitermination protein NusB (134 aa).

The protein belongs to the NusB family.

Functionally, involved in transcription antitermination. Required for transcription of ribosomal RNA (rRNA) genes. Binds specifically to the boxA antiterminator sequence of the ribosomal RNA (rrn) operons. The protein is Transcription antitermination protein NusB of Halothermothrix orenii (strain H 168 / OCM 544 / DSM 9562).